The primary structure comprises 874 residues: Alanine--tRNA ligase (874 aa).

Zn(2+)-binding residues include H563, H567, C665, and H669.

Belongs to the class-II aminoacyl-tRNA synthetase family. Zn(2+) serves as cofactor.

It is found in the cytoplasm. The catalysed reaction is tRNA(Ala) + L-alanine + ATP = L-alanyl-tRNA(Ala) + AMP + diphosphate. Functionally, catalyzes the attachment of alanine to tRNA(Ala) in a two-step reaction: alanine is first activated by ATP to form Ala-AMP and then transferred to the acceptor end of tRNA(Ala). Also edits incorrectly charged Ser-tRNA(Ala) and Gly-tRNA(Ala) via its editing domain. This is Alanine--tRNA ligase from Actinobacillus pleuropneumoniae serotype 5b (strain L20).